Reading from the N-terminus, the 325-residue chain is Elongation factor P--(R)-beta-lysine ligase (325 aa).

Ser76–Glu78 contacts substrate. ATP-binding positions include Arg100–Glu102 and Asn109. Residue Tyr118 participates in substrate binding. Residue Glu244–Leu245 coordinates ATP. Glu251 is a binding site for substrate. ATP is bound at residue Gly300.

The protein belongs to the class-II aminoacyl-tRNA synthetase family. EpmA subfamily. As to quaternary structure, homodimer.

The enzyme catalyses D-beta-lysine + L-lysyl-[protein] + ATP = N(6)-((3R)-3,6-diaminohexanoyl)-L-lysyl-[protein] + AMP + diphosphate + H(+). In terms of biological role, with EpmB is involved in the beta-lysylation step of the post-translational modification of translation elongation factor P (EF-P) on 'Lys-34'. Catalyzes the ATP-dependent activation of (R)-beta-lysine produced by EpmB, forming a lysyl-adenylate, from which the beta-lysyl moiety is then transferred to the epsilon-amino group of EF-P 'Lys-34'. The protein is Elongation factor P--(R)-beta-lysine ligase of Salmonella paratyphi A (strain ATCC 9150 / SARB42).